Consider the following 419-residue polypeptide: tRNA(Met) cytidine acetate ligase (419 aa).

ATP contacts are provided by residues 7 to 20 (ITEY…HLHH), Gly-101, Asn-163, and Arg-188.

Belongs to the TmcAL family.

The protein resides in the cytoplasm. It catalyses the reaction cytidine(34) in elongator tRNA(Met) + acetate + ATP = N(4)-acetylcytidine(34) in elongator tRNA(Met) + AMP + diphosphate. Functionally, catalyzes the formation of N(4)-acetylcytidine (ac(4)C) at the wobble position of elongator tRNA(Met), using acetate and ATP as substrates. First activates an acetate ion to form acetyladenylate (Ac-AMP) and then transfers the acetyl group to tRNA to form ac(4)C34. This chain is tRNA(Met) cytidine acetate ligase, found in Syntrophotalea carbinolica (strain DSM 2380 / NBRC 103641 / GraBd1) (Pelobacter carbinolicus).